Consider the following 431-residue polypeptide: MAQKIQSVKGMNDLLPVEQKDFKLTAAFWQAFEDTVNRWTRAYGYRQIRTPIVEQTGLFVRSIGEETDVVGKEMYTFSDSNDSLSLSLRPEGTASCLRAVVEHNLLYNSPQKLWYMGPMFRRERPQKGRYRQFHQVGIEALGFEGPDIDAEIIAMSADLWEKLGIREYLTLEINSLGNREERAAHRAALVEYLTRYEDKLDEDSKRRLKTNPLRVLDTKNPDLQEICNAAPRLVDYLGEASQNHYARFKAMLDGLGIQYIENPRLVRGLDYYNQTVFEWTTDKLGAQATVCGGGRYDGLIEELGGKPAPSIGFAMGIERLLLLVSEYGSLEVNAAPDVYAMHQGERADLQVMKYAQALRTQGFNVMQHSGYQSLKAQMKKADNSGARFALIVAQDELANGTVTLKDMNGAHGQQTVAAEDLTHTLQQWKNA.

It belongs to the class-II aminoacyl-tRNA synthetase family. As to quaternary structure, homodimer.

It is found in the cytoplasm. The enzyme catalyses tRNA(His) + L-histidine + ATP = L-histidyl-tRNA(His) + AMP + diphosphate + H(+). The chain is Histidine--tRNA ligase from Neisseria meningitidis serogroup C / serotype 2a (strain ATCC 700532 / DSM 15464 / FAM18).